We begin with the raw amino-acid sequence, 98 residues long: Prostate and testis expressed protein 3 (98 aa).

The N-terminal stretch at Met-1 to Ser-20 is a signal peptide. The UPAR/Ly6 domain maps to Leu-21 to Lys-97. 4 cysteine pairs are disulfide-bonded: Cys-23–Cys-50, Cys-26–Cys-35, Cys-42–Cys-68, and Cys-72–Cys-88.

Belongs to the PATE family. In terms of tissue distribution, specifically expressed in prostate and testis.

Its subcellular location is the secreted. The polypeptide is Prostate and testis expressed protein 3 (PATE3) (Homo sapiens (Human)).